Here is a 326-residue protein sequence, read N- to C-terminus: Tetraacyldisaccharide 4'-kinase (326 aa).

Threonine 55–threonine 62 contacts ATP.

This sequence belongs to the LpxK family.

It carries out the reaction a lipid A disaccharide + ATP = a lipid IVA + ADP + H(+). The protein operates within glycolipid biosynthesis; lipid IV(A) biosynthesis; lipid IV(A) from (3R)-3-hydroxytetradecanoyl-[acyl-carrier-protein] and UDP-N-acetyl-alpha-D-glucosamine: step 6/6. Transfers the gamma-phosphate of ATP to the 4'-position of a tetraacyldisaccharide 1-phosphate intermediate (termed DS-1-P) to form tetraacyldisaccharide 1,4'-bis-phosphate (lipid IVA). The sequence is that of Tetraacyldisaccharide 4'-kinase from Erwinia tasmaniensis (strain DSM 17950 / CFBP 7177 / CIP 109463 / NCPPB 4357 / Et1/99).